The sequence spans 159 residues: Small ribosomal subunit protein uS7 (159 aa).

Belongs to the universal ribosomal protein uS7 family. Part of the 30S ribosomal subunit. Contacts proteins S9 and S11.

Its function is as follows. One of the primary rRNA binding proteins, it binds directly to 16S rRNA where it nucleates assembly of the head domain of the 30S subunit. Is located at the subunit interface close to the decoding center, probably blocks exit of the E-site tRNA. The protein is Small ribosomal subunit protein uS7 of Wolbachia pipientis wMel.